Reading from the N-terminus, the 35-residue chain is Small toxic polypeptide LdrB (35 aa).

A helical transmembrane segment spans residues 10-30; the sequence is FWHDLAAPILAGIITAAIVGW.

The protein belongs to the Ldr toxic peptide family.

It is found in the cell inner membrane. Its function is as follows. Toxic component of a type I toxin-antitoxin (TA) system. Overexpression causes rapid cell killing, probably by disrupting the cell inner membrane and disruption of ATP synthesis. In Escherichia coli (strain K12), this protein is Small toxic polypeptide LdrB (ldrB).